A 257-amino-acid chain; its full sequence is Snake venom serine protease serpentokallikrein-2 (257 aa).

The N-terminal stretch at 1–18 is a signal peptide; sequence MVLIRVLANLLILQLSYA. A propeptide spanning residues 19 to 24 is cleaved from the precursor; it reads QKSSEL. The region spanning 25–248 is the Peptidase S1 domain; it reads VIGGDECNIN…HLDWIKGIIA (224 aa). Disulfide bonds link Cys31–Cys162, Cys49–Cys65, Cys97–Cys255, Cys141–Cys209, Cys173–Cys188, and Cys199–Cys224. His64 serves as the catalytic Charge relay system. N-linked (GlcNAc...) asparagine glycosylation is present at Asn102. Catalysis depends on Asp109, which acts as the Charge relay system. Ser203 serves as the catalytic Charge relay system.

It belongs to the peptidase S1 family. Snake venom subfamily. As to quaternary structure, monomer. In terms of tissue distribution, expressed by the venom gland.

The protein resides in the secreted. Functionally, snake venom serine protease that may act in the hemostasis system of the prey. The chain is Snake venom serine protease serpentokallikrein-2 from Protobothrops mucrosquamatus (Taiwan habu).